The primary structure comprises 696 residues: Glycine--tRNA ligase beta subunit (696 aa).

Belongs to the class-II aminoacyl-tRNA synthetase family. As to quaternary structure, tetramer of two alpha and two beta subunits.

It localises to the cytoplasm. The enzyme catalyses tRNA(Gly) + glycine + ATP = glycyl-tRNA(Gly) + AMP + diphosphate. This chain is Glycine--tRNA ligase beta subunit, found in Nitratidesulfovibrio vulgaris (strain DP4) (Desulfovibrio vulgaris).